The primary structure comprises 306 residues: Methionyl-tRNA formyltransferase (306 aa).

108-111 (SLLP) lines the (6S)-5,6,7,8-tetrahydrofolate pocket.

The protein belongs to the Fmt family.

The catalysed reaction is L-methionyl-tRNA(fMet) + (6R)-10-formyltetrahydrofolate = N-formyl-L-methionyl-tRNA(fMet) + (6S)-5,6,7,8-tetrahydrofolate + H(+). Attaches a formyl group to the free amino group of methionyl-tRNA(fMet). The formyl group appears to play a dual role in the initiator identity of N-formylmethionyl-tRNA by promoting its recognition by IF2 and preventing the misappropriation of this tRNA by the elongation apparatus. This chain is Methionyl-tRNA formyltransferase, found in Arthrobacter sp. (strain FB24).